The primary structure comprises 167 residues: Translationally-controlled tumor protein homolog (167 aa).

Positions 1-167 constitute a TCTP domain; that stretch reads MLIFEDVISG…WKHGVKENKI (167 aa).

It belongs to the TCTP family.

Its subcellular location is the cytoplasm. The protein resides in the cytoskeleton. Functionally, involved in protein synthesis. Involved in microtubule stabilization. This is Translationally-controlled tumor protein homolog (TMA19) from Candida albicans (strain SC5314 / ATCC MYA-2876) (Yeast).